The primary structure comprises 347 residues: MGTRGPYALVDTTPAKTILVYRNGDQFYVGRKFVFSRRRVANFEALLEQLTEQVEVPFGVRRLYTPTRGHPVLGLDALQTGGKYVAAGRERFKKLDYIHIVPRKPSKMRKLKEIKPVVHCDIKVPSRWQIQSRTSRYINVFTNGRLFIPPIKVIIPKFSLSDWNSVLAMIGEKVFPLGGVRKLFTMDGHLLDDSKNLQDNYFYVAAGLETFKSIPYWKSSWVPSEVQQRFGGNDKYTQTKKRVESKVKEPLQNDSVPPRSQDSVYYAKEKKQMDTELLVQSGAEGDVYKAQTPAKEAQEALEVKEDPEVKVEVPVDQAPAEIVKEIDEIGDSSPGLKSGMHIPASFM.

2 Doublecortin domains span residues 16-98 and 136-217; these read KTIL…LDYI and RYIN…IPYW. The disordered stretch occupies residues 235 to 260; sequence KYTQTKKRVESKVKEPLQNDSVPPRS. Over residues 241-251 the composition is skewed to basic and acidic residues; that stretch reads KRVESKVKEPL.

It is found in the cell projection. It localises to the cilium. The protein resides in the flagellum. Its subcellular location is the cytoplasm. The sequence is that of Doublecortin domain-containing protein 2C from Mus musculus (Mouse).